A 729-amino-acid polypeptide reads, in one-letter code: Elongation factor 2 (729 aa).

Positions 19–262 constitute a tr-type G domain; that stretch reads EQIRNIAIAA…MVCEHFPNPV (244 aa). Residues 28-35, 94-98, and 148-151 each bind GTP; these read AHVDHGKT, DTPGH, and NKVD. Histidine 597 carries the diphthamide modification.

The protein belongs to the TRAFAC class translation factor GTPase superfamily. Classic translation factor GTPase family. EF-G/EF-2 subfamily.

It is found in the cytoplasm. Functionally, catalyzes the GTP-dependent ribosomal translocation step during translation elongation. During this step, the ribosome changes from the pre-translocational (PRE) to the post-translocational (POST) state as the newly formed A-site-bound peptidyl-tRNA and P-site-bound deacylated tRNA move to the P and E sites, respectively. Catalyzes the coordinated movement of the two tRNA molecules, the mRNA and conformational changes in the ribosome. The protein is Elongation factor 2 of Natronomonas pharaonis (strain ATCC 35678 / DSM 2160 / CIP 103997 / JCM 8858 / NBRC 14720 / NCIMB 2260 / Gabara) (Halobacterium pharaonis).